Consider the following 311-residue polypeptide: tRNA-cytidine(32) 2-sulfurtransferase (311 aa).

The PP-loop motif motif lies at 47 to 52 (SGGKDS). Residues Cys122, Cys125, and Cys213 each contribute to the [4Fe-4S] cluster site.

The protein belongs to the TtcA family. In terms of assembly, homodimer. Mg(2+) is required as a cofactor. [4Fe-4S] cluster serves as cofactor.

It localises to the cytoplasm. The catalysed reaction is cytidine(32) in tRNA + S-sulfanyl-L-cysteinyl-[cysteine desulfurase] + AH2 + ATP = 2-thiocytidine(32) in tRNA + L-cysteinyl-[cysteine desulfurase] + A + AMP + diphosphate + H(+). Its pathway is tRNA modification. In terms of biological role, catalyzes the ATP-dependent 2-thiolation of cytidine in position 32 of tRNA, to form 2-thiocytidine (s(2)C32). The sulfur atoms are provided by the cysteine/cysteine desulfurase (IscS) system. The protein is tRNA-cytidine(32) 2-sulfurtransferase of Salmonella paratyphi A (strain ATCC 9150 / SARB42).